A 631-amino-acid polypeptide reads, in one-letter code: Biotin--protein ligase (631 aa).

The BPL/LPL catalytic domain occupies 341–553 (ELYAKLINGC…QFDRYHRLLL (213 aa)).

This sequence belongs to the biotin--protein ligase family. In terms of assembly, monomer.

The protein localises to the cytoplasm. The catalysed reaction is apo-[methylmalonyl-CoA:pyruvate carboxytransferase] + biotin + ATP = holo-[methylmalonyl-CoA:pyruvate carboxytransferase] + AMP + diphosphate + H(+). It carries out the reaction apo-[propionyl-CoA:carbon-dioxide ligase (ADP-forming)] + biotin + ATP = holo-[propionyl-CoA:carbon-dioxide ligase (ADP-forming)] + AMP + diphosphate + H(+). It catalyses the reaction apo-[3-methylcrotonoyl-CoA:carbon-dioxide ligase (ADP-forming)] + biotin + ATP = holo-[3-methylcrotonoyl-CoA:carbon-dioxide ligase (ADP-forming)] + AMP + diphosphate + H(+). The enzyme catalyses biotin + L-lysyl-[protein] + ATP = N(6)-biotinyl-L-lysyl-[protein] + AMP + diphosphate + H(+). In terms of biological role, post-translational modification of specific protein by attachment of biotin. Acts on various carboxylases such as acetyl-CoA-carboxylase, pyruvate carboxylase, propionyl CoA carboxylase, and 3-methylcrotonyl CoA carboxylase. The polypeptide is Biotin--protein ligase (bpl1) (Schizosaccharomyces pombe (strain 972 / ATCC 24843) (Fission yeast)).